A 542-amino-acid polypeptide reads, in one-letter code: Putative leucine aminopeptidase 1 (542 aa).

Mn(2+) contacts are provided by Lys294 and Asp299. The active site involves Lys323. Mn(2+) is bound by residues Asp336, Asp396, and Glu398. Arg400 is an active-site residue.

The protein belongs to the peptidase M17 family. In terms of assembly, homohexamer (dimer of homotrimers). Mn(2+) serves as cofactor.

The protein localises to the cytoplasm. The catalysed reaction is Release of an N-terminal amino acid, Xaa-|-Yaa-, in which Xaa is preferably Leu, but may be other amino acids including Pro although not Arg or Lys, and Yaa may be Pro. Amino acid amides and methyl esters are also readily hydrolyzed, but rates on arylamides are exceedingly low.. It carries out the reaction Release of N-terminal proline from a peptide.. Its function is as follows. Presumably involved in the processing and regular turnover of intracellular proteins. Catalyzes the removal of unsubstituted N-terminal amino acids from various peptides. The protein is Putative leucine aminopeptidase 1 of Oryza sativa subsp. japonica (Rice).